The following is a 315-amino-acid chain: 1,2-dihydroxy-3,5-cyclohexadiene-1,4-dicarboxylate dehydrogenase (315 aa).

A divalent metal cation contacts are provided by H159, H203, and H255.

Belongs to the PdxA family.

The catalysed reaction is (3S,4R)-3,4-dihydroxycyclohexa-1,5-diene-1,4-dicarboxylate + NAD(+) = 3,4-dihydroxybenzoate + CO2 + NADH. Involved in the degradation of terephthalate (TPA) via the protocatechuate (PCA) 4,5-cleavage pathway. Catalyzes the dehydrogenation of 1,2-dihydroxy-3,5-cyclohexadiene-1,4-dicarboxylate (DCD) to yield protocatechuate (PCA). This is 1,2-dihydroxy-3,5-cyclohexadiene-1,4-dicarboxylate dehydrogenase (tphBI) from Comamonas sp.